The sequence spans 339 residues: Annexin A2 (339 aa).

Ser2 bears the N-acetylserine mark. Residues 2-24 (STVHEILCKLSLEGDHSTPPSAY) are S100A10-binding site. A Phosphotyrosine; by SRC modification is found at Tyr24. A Phosphoserine; by PKC modification is found at Ser26. Annexin repeat units follow at residues 33 to 104 (FDAE…GLLK) and 105 to 176 (TPAQ…ALAK). Position 49 is an N6-acetyllysine; alternate (Lys49). Lys49 participates in a covalent cross-link: Glycyl lysine isopeptide (Lys-Gly) (interchain with G-Cter in SUMO1); alternate. Lys49 participates in a covalent cross-link: Glycyl lysine isopeptide (Lys-Gly) (interchain with G-Cter in SUMO2); alternate. Lys152 is subject to N6-acetyllysine. At Ser184 the chain carries Phosphoserine. 2 Annexin repeats span residues 189-261 (ELID…NLVQ) and 265-336 (NKPL…YLCG). Tyr199 carries the post-translational modification Phosphotyrosine. N6-acetyllysine is present on Lys227.

Belongs to the annexin family. As to quaternary structure, heterotetramer containing 2 light chains of S100A10/p11 and 2 heavy chains of ANXA2/p36. Interacts with ATP1B1. Interacts with DYSF. Interacts with COCH. Interacts (via repeat Annexin 1) with PCSK9 (via the C-terminal domain); the interaction inhibits the degradation of LDLR. Interacts with CEACAM1 (via the cytoplasmic domain); this interaction is regulated by phosphorylation of CEACAM1. Interacts with APPL2 and APPL1; targets APPL2 to endosomes and acting in parallel to RAB5A. Interacts with S100A4. May interact with UBAP2. Interacts with PLEKHG4B; this interaction is required for PLEKHG4B localization to cell-cell adhesions. Post-translationally, ISGylated.

It localises to the secreted. Its subcellular location is the extracellular space. The protein localises to the extracellular matrix. It is found in the basement membrane. Functionally, calcium-regulated membrane-binding protein whose affinity for calcium is greatly enhanced by anionic phospholipids. It binds two calcium ions with high affinity. May be involved in heat-stress response. Inhibits PCSK9-enhanced LDLR degradation, probably reduces PCSK9 protein levels via a translational mechanism but also competes with LDLR for binding with PCSK9. Binds to endosomes damaged by phagocytosis of particulate wear debris and participates in endosomal membrane stabilization, thereby limiting NLRP3 inflammasome activation. Required for endothelial cell surface plasmin generation and may support fibrinolytic surveillance and neoangiogenesis. This is Annexin A2 (ANXA2) from Canis lupus familiaris (Dog).